Here is a 182-residue protein sequence, read N- to C-terminus: 7-carboxy-7-deazaguanine synthase (182 aa).

Substrate is bound by residues 12-14 (LQG) and arginine 27. The Radical SAM core domain maps to 18–182 (HTGTPAVFIR…LQTHKLIDIR (165 aa)). 3 residues coordinate [4Fe-4S] cluster: cysteine 31, cysteine 35, and cysteine 38. Threonine 40 serves as a coordination point for Mg(2+). Threonine 68 serves as a coordination point for substrate. S-adenosyl-L-methionine-binding positions include glycine 70 and 111–113 (SPK).

This sequence belongs to the radical SAM superfamily. 7-carboxy-7-deazaguanine synthase family. As to quaternary structure, homodimer. It depends on [4Fe-4S] cluster as a cofactor. Requires S-adenosyl-L-methionine as cofactor. Mg(2+) serves as cofactor.

The enzyme catalyses 6-carboxy-5,6,7,8-tetrahydropterin + H(+) = 7-carboxy-7-deazaguanine + NH4(+). The protein operates within purine metabolism; 7-cyano-7-deazaguanine biosynthesis. Functionally, catalyzes the complex heterocyclic radical-mediated conversion of 6-carboxy-5,6,7,8-tetrahydropterin (CPH4) to 7-carboxy-7-deazaguanine (CDG), a step common to the biosynthetic pathways of all 7-deazapurine-containing compounds. The sequence is that of 7-carboxy-7-deazaguanine synthase from Bacteroides thetaiotaomicron (strain ATCC 29148 / DSM 2079 / JCM 5827 / CCUG 10774 / NCTC 10582 / VPI-5482 / E50).